The sequence spans 415 residues: Histidine--tRNA ligase (415 aa).

This sequence belongs to the class-II aminoacyl-tRNA synthetase family. Homodimer.

It localises to the cytoplasm. It catalyses the reaction tRNA(His) + L-histidine + ATP = L-histidyl-tRNA(His) + AMP + diphosphate + H(+). This Rickettsia canadensis (strain McKiel) protein is Histidine--tRNA ligase.